The primary structure comprises 463 residues: Argininosuccinate lyase (463 aa).

The protein belongs to the lyase 1 family. Argininosuccinate lyase subfamily.

It localises to the cytoplasm. The catalysed reaction is 2-(N(omega)-L-arginino)succinate = fumarate + L-arginine. The protein operates within amino-acid biosynthesis; L-arginine biosynthesis; L-arginine from L-ornithine and carbamoyl phosphate: step 3/3. This chain is Argininosuccinate lyase, found in Thermosynechococcus vestitus (strain NIES-2133 / IAM M-273 / BP-1).